The chain runs to 148 residues: MLKAFKEFAVKGNALDMAVGVILGASFGTIVKSLVDDLIMPPIGLVLGGVDFSNLFVTLRDGAAPGPYASLAAAKQAGAVTLNVGVFANTVVSFTIVAFAVFLLVRGVNTLRERLEGPAAPKQQACPFCFSKIDVRATRCPHCTATIG.

Transmembrane regions (helical) follow at residues 15-35 (LDMAVGVILGASFGTIVKSLV) and 84-104 (VGVFANTVVSFTIVAFAVFLL).

This sequence belongs to the MscL family. In terms of assembly, homopentamer.

It is found in the cell inner membrane. Its function is as follows. Channel that opens in response to stretch forces in the membrane lipid bilayer. May participate in the regulation of osmotic pressure changes within the cell. The sequence is that of Large-conductance mechanosensitive channel from Nitratidesulfovibrio vulgaris (strain DSM 19637 / Miyazaki F) (Desulfovibrio vulgaris).